A 440-amino-acid polypeptide reads, in one-letter code: Chromosome partition protein MukF (440 aa).

The segment at 208-236 is leucine-zipper; sequence LSETSGTLRELQDTLEAAGDKLQANLLRI.

It belongs to the MukF family. Interacts, and probably forms a ternary complex, with MukE and MukB via its C-terminal region. The complex formation is stimulated by calcium or magnesium. It is required for an interaction between MukE and MukB.

The protein localises to the cytoplasm. Its subcellular location is the nucleoid. Involved in chromosome condensation, segregation and cell cycle progression. May participate in facilitating chromosome segregation by condensation DNA from both sides of a centrally located replisome during cell division. Not required for mini-F plasmid partitioning. Probably acts via its interaction with MukB and MukE. Overexpression results in anucleate cells. It has a calcium binding activity. This chain is Chromosome partition protein MukF, found in Salmonella arizonae (strain ATCC BAA-731 / CDC346-86 / RSK2980).